A 144-amino-acid chain; its full sequence is MRSRSFLVLVAVFLICETLVAQRLDRIRGPKGQGQDPVEGQDQDEGQGPVKVEILDIGQDLVKGQDPVEGQDPVKAQLPDKVQDPVKAQPPIQGGFLFPKPGVCPKIIFCPLVNPPIKCWRDSHCPGVKKCCPSLCGKGCVTPR.

A signal peptide spans 1–21; sequence MRSRSFLVLVAVFLICETLVA. Residues 28 to 49 form a disordered region; the sequence is RGPKGQGQDPVEGQDQDEGQGP. Gly-34 is a region of interest (8 X 6 AA approximate tandem repeats). 8 repeat units span residues 34-39, 40-45, 46-51, 58-63, 64-69, 70-75, 76-81, and 82-87. The tract at residues 64-85 is disordered; the sequence is GQDPVEGQDPVKAQLPDKVQDP. The WAP domain occupies 97–144; it reads LFPKPGVCPKIIFCPLVNPPIKCWRDSHCPGVKKCCPSLCGKGCVTPR. 4 disulfide bridges follow: Cys-104–Cys-132, Cys-110–Cys-136, Cys-119–Cys-131, and Cys-125–Cys-140.

As to expression, large intestine (relatively low levels).

This Sus scrofa (Pig) protein is Protein WAP-3.